We begin with the raw amino-acid sequence, 874 residues long: Isopimaradiene synthase, chloroplastic (874 aa).

A compositionally biased stretch (polar residues) spans 1–12 (MALPSSSLSSRI). The disordered stretch occupies residues 1 to 20 (MALPSSSLSSRIPTGPHPLT). Residues 1–37 (MALPSSSLSSRIPTGPHPLTHTQCIPHFSTTINAGIS) constitute a chloroplast transit peptide. Mg(2+) is bound by residues Asp-407, Asp-409, Asp-626, Asp-630, Asn-770, and Glu-778. Positions 407–410 (DIDD) match the DXDD motif motif. The DDXXD motif signature appears at 626 to 630 (DDLYD).

The protein belongs to the terpene synthase family. Tpsd subfamily. It depends on Mg(2+) as a cofactor. Mn(2+) serves as cofactor.

Its subcellular location is the plastid. It localises to the chloroplast. It catalyses the reaction (+)-copalyl diphosphate = isopimara-8(14),15-diene + diphosphate. Its pathway is terpene metabolism; oleoresin biosynthesis. Terpene synthase (TPS) involved in the biosynthesis of diterpene natural products included in conifer oleoresin secretions and volatile emissions; these compounds contribute to biotic and abiotic stress defense against herbivores and pathogens. Catalyzes the conversion of (+)-copalyl diphosphate ((+)-CPP) to isopimaradiene. This Picea sitchensis (Sitka spruce) protein is Isopimaradiene synthase, chloroplastic.